Here is a 1819-residue protein sequence, read N- to C-terminus: U3 small nucleolar RNA-associated protein 10 (1819 aa).

The stretch at 1779 to 1817 (LIPYIAELLEDDDEDVELEVRKGLVKVLENVLGEPLDRY) is one HEAT repeat.

Belongs to the HEATR1/UTP10 family. Component of the ribosomal small subunit (SSU) processome.

It is found in the nucleus. The protein resides in the nucleolus. In terms of biological role, involved in nucleolar processing of pre-18S ribosomal RNA. Involved in ribosome biosynthesis. The sequence is that of U3 small nucleolar RNA-associated protein 10 from Meyerozyma guilliermondii (strain ATCC 6260 / CBS 566 / DSM 6381 / JCM 1539 / NBRC 10279 / NRRL Y-324) (Yeast).